Here is a 123-residue protein sequence, read N- to C-terminus: Peptide methionine sulfoxide reductase MsrA (123 aa).

Residue Cys8 is part of the active site.

Belongs to the MsrA Met sulfoxide reductase family.

The enzyme catalyses L-methionyl-[protein] + [thioredoxin]-disulfide + H2O = L-methionyl-(S)-S-oxide-[protein] + [thioredoxin]-dithiol. It catalyses the reaction [thioredoxin]-disulfide + L-methionine + H2O = L-methionine (S)-S-oxide + [thioredoxin]-dithiol. Functionally, has an important function as a repair enzyme for proteins that have been inactivated by oxidation. Catalyzes the reversible oxidation-reduction of methionine sulfoxide in proteins to methionine. In Thermoactinomyces vulgaris, this protein is Peptide methionine sulfoxide reductase MsrA.